We begin with the raw amino-acid sequence, 242 residues long: NAD-dependent protein deacetylase (242 aa).

The Deacetylase sirtuin-type domain maps to 1 to 242; that stretch reads MQQFEEVHSI…EFVEGLSSRK (242 aa). Residues A23, T27, F34, R35, Q102, I104, D105, and H120 each coordinate NAD(+). F34 lines the nicotinamide pocket. Residues I104 and D105 each contribute to the nicotinamide site. The active-site Proton acceptor is H120. Residues C128, C131, C148, and C151 each contribute to the Zn(2+) site. NAD(+) contacts are provided by T187, S188, N213, and I231.

This sequence belongs to the sirtuin family. Class U subfamily. It depends on Zn(2+) as a cofactor.

Its subcellular location is the cytoplasm. The enzyme catalyses N(6)-acetyl-L-lysyl-[protein] + NAD(+) + H2O = 2''-O-acetyl-ADP-D-ribose + nicotinamide + L-lysyl-[protein]. Its function is as follows. NAD-dependent protein deacetylase which modulates the activities of several enzymes which are inactive in their acetylated form. The sequence is that of NAD-dependent protein deacetylase from Bacillus cereus (strain ATCC 10987 / NRS 248).